The chain runs to 832 residues: Receptor-interacting serine/threonine-protein kinase 4 (832 aa).

The Protein kinase domain occupies 22–286 (FTGWEKVGSG…QGNGLNGELI (265 aa)). Residues 28–36 (VGSGGFGQV) and lysine 51 contribute to the ATP site. A Glycyl lysine isopeptide (Lys-Gly) (interchain with G-Cter in ubiquitin) cross-link involves residue lysine 51. Catalysis depends on aspartate 143, which acts as the Proton acceptor. Lysine 145 participates in a covalent cross-link: Glycyl lysine isopeptide (Lys-Gly) (interchain with G-Cter in ubiquitin). 2 disordered regions span residues 325–368 (QEIT…RLKR) and 389–424 (SGVS…GVSS). Over residues 329-342 (SETEDLCEKPDDEV) the composition is skewed to acidic residues. Basic and acidic residues predominate over residues 343–359 (KETAHDLDVKSPPEPRS). The segment covering 403 to 424 (RSSSESKLPSSGSGKRLSGVSS) has biased composition (low complexity). ANK repeat units follow at residues 485–514 (SGAS…NPNL), 518–547 (RGST…SVNA), 551–580 (DQWT…SVNE), 584–613 (EGRT…DVSL), 617–647 (DAWL…SVNA), 651–680 (DGRT…DVNV), 684–713 (LAQT…GKEA), 717–746 (DGYT…DVLA), 750–780 (LNQT…DLFD), and 782–811 (QGLS…HINL).

The protein belongs to the protein kinase superfamily. TKL Ser/Thr protein kinase family. As to quaternary structure, interacts with PRKCB. Interacts with TRAF1, TRAF2, TRAF3 and TRAF5. Interacts with BIRC2/c-IAP1, BIRC3/c-IAP2 and XIAP/BIRC4. In terms of processing, may be phosphorylated by MAP3K2 and MAP3K3. Post-translationally, proteolytically cleaved by during Fas-induced apoptosis. Cleavage at Asp-388 and Asp-426. Polyubiquitinated with 'Lys-48' and 'Lys-63'-linked chains by BIRC2/c-IAP1 and BIRC3/c-IAP2, leading to activation of NF-kappa-B. As to expression, expressed in hair follicles and skin.

Its subcellular location is the cytoplasm. It localises to the membrane. It catalyses the reaction L-seryl-[protein] + ATP = O-phospho-L-seryl-[protein] + ADP + H(+). It carries out the reaction L-threonyl-[protein] + ATP = O-phospho-L-threonyl-[protein] + ADP + H(+). Serine/threonine protein kinase. Required for embryonic skin development and correct skin homeostasis in adults, via phosphorylation of PKP1 and subsequent promotion of keratinocyte differentiation and cell adhesion. It is a direct transcriptional target of TP63. Plays a role in NF-kappa-B activation. In Homo sapiens (Human), this protein is Receptor-interacting serine/threonine-protein kinase 4 (RIPK4).